The chain runs to 154 residues: Putative NADPH-dependent 7-cyano-7-deazaguanine reductase (154 aa).

D52 serves as the catalytic Proton donor. Residues 67-69 and 86-87 contribute to the substrate site; these read VES and HE.

Belongs to the GTP cyclohydrolase I family. QueF type 1 subfamily.

Its subcellular location is the cytoplasm. It carries out the reaction 7-aminomethyl-7-carbaguanine + 2 NADP(+) = 7-cyano-7-deazaguanine + 2 NADPH + 3 H(+). It functions in the pathway tRNA modification; tRNA-queuosine biosynthesis. In terms of biological role, catalyzes the NADPH-dependent reduction of 7-cyano-7-deazaguanine (preQ0) to 7-aminomethyl-7-deazaguanine (preQ1). This Streptococcus pneumoniae (strain ATCC BAA-255 / R6) protein is Putative NADPH-dependent 7-cyano-7-deazaguanine reductase.